Consider the following 423-residue polypeptide: MSSYINKNQSVEILCIGSELLLGNILNSNAKWLAEQLAFIGLPHYLQSVVGDNSQRLLRIILEASRRSRVLITTGGLGPTPDDLTIETIASAFNVKLTKNNDILKDIKRKLNSHSHVSENNFKQALLPEGAEIIPNKSGTAPGIIWTPIVDFTIISLPGVPAEMKQMWIETAKPWLNVNFPERKSLTSKTLKFAGISESFLAENIVDLLDNKNPTIAPYASLGEVKLRLTAQAKTTSEAKRLIEPIEVELLKRFGLKCFAKNDETLSEIVIGLLSKRGETISLAESCTGGNLAAAFTGTPGASEVFLGGIVAYNNSIKENVLGVPIELIKKHGAVSQPVAKEMALGILKIFNTDWSIAISGIAGPSGSTLNKPIGRVEIFIAGPNVNESIQENFGSYRAREEIQKLSVVRALDQLRLFLLRRS.

It belongs to the CinA family.

This is CinA-like protein from Prochlorococcus marinus (strain SARG / CCMP1375 / SS120).